The following is a 542-amino-acid chain: Protein DETOXIFICATION 34 (542 aa).

The next 12 membrane-spanning stretches (helical) occupy residues 97–117 (APIA…SIFV), 127–147 (AVAI…LGMA), 176–196 (ILLG…PLLI), 204–224 (IAEI…ALAI), 240–260 (IMAW…YLFI), 272–292 (AAFD…VVGW), 316–336 (FASA…IVLT), 344–364 (IAVG…MLFI), 390–410 (VIVT…VILI), 435–455 (LLGI…VAVG), 462–482 (VAYI…FLLG), and 491–511 (GIWI…LYMI).

This sequence belongs to the multi antimicrobial extrusion (MATE) (TC 2.A.66.1) family.

It is found in the membrane. This is Protein DETOXIFICATION 34 from Arabidopsis thaliana (Mouse-ear cress).